The following is a 300-amino-acid chain: DNA repair protein RecO (300 aa).

This sequence belongs to the RecO family.

Its function is as follows. Involved in DNA repair and RecF pathway recombination. The polypeptide is DNA repair protein RecO (Nostoc punctiforme (strain ATCC 29133 / PCC 73102)).